A 1969-amino-acid polypeptide reads, in one-letter code: MEKSEQTNSFESSNNNNNNIDSNINNNLENNNNKNNNNNNNNNNNNNNNNNNIENSIDKNNKEDNSLVGVNSHRKHRTRLKSKKGNKHETKKEIDYKDLLIKLPHNAVSNFNSLENESSDNLTPPPPINSSPLPLPLSLPLPLSLPLPLPLPLPLPLPLPPNKENIEINMEDIIIPENKIKNKNNNNNIDINNNNNNNNEKQTSIIEMEDLDKLKQPKINEGSTGKKGKSHFFSFLQRGDKTNSSILKSSEQPTHKKTKTNINTPPDYPIHYFGHHKRFSSSSDEGSDNSKSQHSSVNTPTLSRHNIDSLPESQQSQKQSQQQSQQPQQQNKTKQIQQTILNNNNDNLNEVTPIKKSSLPTLEVSPIQSNIINNQTTEKHNSGGFTALTSASAMNHQNQRRYREHHQINHQQQQQQHHRHYHHHINSGGSSGSSDKFDYVSATGLSTKNGFNPKSLDVDHFPISDKRNNINIQAPSTPVQSRNYPLFTTQSPKNANSASKSKNKLKNLKRKIASSITGNNPSGISSSAFNHSFSSWNNNNSVYTGGNSGGGSGGGGSGGGGGGGGGGGGIGTPSSFLDDNNNLNNGENFKNSNSYNNNNGSNRSISHDEWLRQFYHKHLERYEKTKAVDYLIIKPWNFISWILRPSRIANYQSKILYRRAYILNFLNLVLFVVYLLSTILSSNEWFIFAPGILLSVIYFFLGKINNKMYLIAFLTISTAVAINITSIIYDLTHTRPTDKLIFSWDLLVMIMVPLLFPSIVYSIVILISVAVTYIGLGIYVQSSHNFYLLDAYDSFGELLRSIIIVFVILMFYTILSSVDLKEIERKESRIQSLFRISNEALVVHKDGLITDANPAFESMFQIKLQDLLYPIQSGIWEFLPALEGMFEPGASKLFDNPDMGVIETTGIDSSGRTFQVEVRTNKATYDGEPVDVISIIDITGRKQLMEADYALRKAEAANEAKVIFLTTVSHELRTPINGVLASADILERTTLDSTQKEFLNCIKLSGNYLLDLINDILDYSKIEAGKMEIIKYDFSILKMLDNSIRIVSKNIYEKGLDLCIFIDPNVPVIVNGDQRRIKQILLNFLSNSIKFTNHGQIIIRVKLESDDSTHSLIKFDVEDSGIGIKTEHLNQLFASFSQIDSGNSRKYQGTGLGLSISKRLCKMMGGDVKVKSEFGVGSTFSFTIPCGIPNTTTRFSLQSLGSAIYMGEDIQGINKPIGKKKYGASGVVGIVIDSNKYTRKSISQYFAILKISCVDFENKKEFENYLSTLATVDQTTNPQVYLVITSIIDINQLTTNGLPRDRIYHWILMESPNEERKLPLEFENRFVKPAQFADIVRCLYKIDSINFFIEQMAGSPYKASKDLQSGGSSNESGDGGRSLSGGGGGVGSNGNGNGGGGLDSNISPSELSSSEHQLISTPLSDVNEFEDINLINQSLSGLGPSAKVLNSTYFNGLSQSSKIYNNNNRNGVGIGNHHHDHYYQHRHHHSLPPEEIDYDESPFLFLNKPIRKVYHSQPSTPVTNGIALMDSSSKSPSIPSSSSASASALSPNSRHSNELGNGKTTQSFVFSPTSRKFSLNDSFNPSISTIVLPQVSYSPSMQGGNFPINMESVYKKIESHNNNFKRSESKPSTPTFLSNQPSPATSNSPQLLQSPTTSTTGSINLSPHRSPNIRLPLEVRSGSLSSLKPLREDEELESISDDHTSHLKGSSHSINQQIPSTIQQQQQQQQQQQQQQQQQQQQQQQQQQQQQQQQQQQQQKPQQQQQKPTTTTTTTSTQLPQNIEKTTTTTTTSTTKPTATSSSSSSSKTTKTQQQQHHPTTTTTTKSEKIEKTAAATTSEKIEKILLVEDNFVNVKIFSKLLKDSGYIFDVAHNGVEAVECVKKGAYDLILMDCQMPEMDGFEATTAIRELEKSNLIESPPSKKHSHVVIVALTANSGYKDKQKCLSVGMNDFLQKPIKTSDILIQMIKKHLN.

Polar residues predominate over residues 1–10; it reads MEKSEQTNSF. Disordered regions lie at residues 1–91, 218–335, 412–436, 468–505, and 551–598; these read MEKS…HETK, KINE…KTKQ, QQQQ…SSDK, NNIN…KNKL, and GSGG…YNNN. The segment covering 11-55 has biased composition (low complexity); sequence ESSNNNNNNIDSNINNNLENNNNKNNNNNNNNNNNNNNNNNNIEN. The span at 56 to 65 shows a compositional bias: basic and acidic residues; that stretch reads SIDKNNKEDN. Positions 72 to 86 are enriched in basic residues; that stretch reads SHRKHRTRLKSKKGN. Residues 242 to 252 show a composition bias toward polar residues; that stretch reads TNSSILKSSEQ. Low complexity predominate over residues 280–292; the sequence is SSSSDEGSDNSKS. Residues 293–304 are compositionally biased toward polar residues; sequence QHSSVNTPTLSR. Residues 313-335 are compositionally biased toward low complexity; the sequence is SQQSQKQSQQQSQQPQQQNKTKQ. The span at 416–425 shows a compositional bias: basic residues; that stretch reads QHHRHYHHHI. The span at 469 to 492 shows a compositional bias: polar residues; that stretch reads NINIQAPSTPVQSRNYPLFTTQSP. Gly residues predominate over residues 551–571; the sequence is GSGGGGSGGGGGGGGGGGGIG. Low complexity predominate over residues 574–598; the sequence is SSFLDDNNNLNNGENFKNSNSYNNN. 5 helical membrane-spanning segments follow: residues 660-680, 684-704, 708-728, 747-767, and 795-815; these read AYIL…STIL, EWFI…LGKI, MYLI…TSII, LVMI…VILI, and FGEL…YTIL. The region spanning 967 to 1188 is the Histidine kinase domain; the sequence is TVSHELRTPI…TFSFTIPCGI (222 aa). At His-970 the chain carries Phosphohistidine; by autocatalysis. Disordered stretches follow at residues 1359 to 1415, 1521 to 1563, 1617 to 1709, and 1755 to 1832; these read ASKD…HQLI, GIAL…TTQS, NNNF…SSHS, and QKPQ…TAAA. Positions 1373 to 1398 are enriched in gly residues; the sequence is GDGGRSLSGGGGGVGSNGNGNGGGGL. 2 stretches are compositionally biased toward low complexity: residues 1399-1410 and 1527-1549; these read DSNISPSELSSS and SSSK…SPNS. Polar residues-rich tracts occupy residues 1554-1563 and 1626-1665; these read ELGNGKTTQS and KPST…SPHR. Composition is skewed to low complexity over residues 1755–1774 and 1781–1821; these read QKPQ…TSTQ and KTTT…TTTT. A Response regulatory domain is found at 1840 to 1967; that stretch reads KILLVEDNFV…DILIQMIKKH (128 aa). At Asp-1889 the chain carries 4-aspartylphosphate.

It localises to the membrane. It catalyses the reaction ATP + protein L-histidine = ADP + protein N-phospho-L-histidine.. Functionally, acts in the cytokinin signal transduction pathway that regulates spore germination. Required for the maintenance of spore dormancy. Does not appear to act as a cytokinin receptor. Probably undergoes ATP-dependent autophosphorylation at a conserved histidine residue in the kinase core, which is followed by transfer of the phosphoryl group to a conserved aspartate residue in the receiver domain. This chain is Hybrid signal transduction histidine kinase B (dhkB), found in Dictyostelium discoideum (Social amoeba).